Here is a 285-residue protein sequence, read N- to C-terminus: Protease HtpX homolog (285 aa).

2 helical membrane passes run threonine 7–glycine 27 and glycine 30–aspartate 50. Zn(2+) is bound at residue histidine 131. Residue glutamate 132 is part of the active site. Histidine 135 is a Zn(2+) binding site. 2 helical membrane passes run isoleucine 146–glycine 166 and isoleucine 177–isoleucine 197. Glutamate 202 lines the Zn(2+) pocket.

Belongs to the peptidase M48B family. Zn(2+) serves as cofactor.

It is found in the cell inner membrane. The chain is Protease HtpX homolog from Burkholderia cenocepacia (strain ATCC BAA-245 / DSM 16553 / LMG 16656 / NCTC 13227 / J2315 / CF5610) (Burkholderia cepacia (strain J2315)).